The sequence spans 325 residues: MRIVFFGTPTFAVPTLKKLLANPDIEIITVVTQPDKRRGRGNQLIPSPVKQIAIEQQIPVLQPKSVKKNARTLDFLRQSRADAFVVVAYGQILSPEILEMPRLGCINVHGSILPKYRGAAPVQWCIARGEKETGITTMLMDAGMDTGPMLLKAYTPIALFDNAEQVGATLGQMGADLLLETLSKLDRAEITPIPQNNDDATYAPLIQKSDYLIHWQDSGRRIHDRVRGFYPHALTTFRGQPLKVMATIPLEDLGQLPPELQTKDLSHLSGEVGSIVALWKNFGPVVQTGEGLLLLKEVQLSGKSPRSGGDLVNGSRLTIGEIFVQ.

A (6S)-5,6,7,8-tetrahydrofolate-binding site is contributed by 111 to 114 (SILP).

Belongs to the Fmt family.

It catalyses the reaction L-methionyl-tRNA(fMet) + (6R)-10-formyltetrahydrofolate = N-formyl-L-methionyl-tRNA(fMet) + (6S)-5,6,7,8-tetrahydrofolate + H(+). In terms of biological role, attaches a formyl group to the free amino group of methionyl-tRNA(fMet). The formyl group appears to play a dual role in the initiator identity of N-formylmethionyl-tRNA by promoting its recognition by IF2 and preventing the misappropriation of this tRNA by the elongation apparatus. The protein is Methionyl-tRNA formyltransferase of Microcystis aeruginosa (strain NIES-843 / IAM M-2473).